The following is a 169-amino-acid chain: Ubiquitin-fold modifier-conjugating enzyme 1 (169 aa).

Cysteine 116 serves as the catalytic Glycyl thioester intermediate.

It belongs to the ubiquitin-conjugating enzyme family. UFC1 subfamily.

E2-like enzyme which forms an intermediate with UFM1 via a thioester linkage. The sequence is that of Ubiquitin-fold modifier-conjugating enzyme 1 from Branchiostoma floridae (Florida lancelet).